The sequence spans 313 residues: tRNA dimethylallyltransferase (313 aa).

An ATP-binding site is contributed by 8–15 (GPTGTGKS). Residue 10–15 (TGTGKS) participates in substrate binding.

Belongs to the IPP transferase family. In terms of assembly, monomer. Requires Mg(2+) as cofactor.

The enzyme catalyses adenosine(37) in tRNA + dimethylallyl diphosphate = N(6)-dimethylallyladenosine(37) in tRNA + diphosphate. Its function is as follows. Catalyzes the transfer of a dimethylallyl group onto the adenine at position 37 in tRNAs that read codons beginning with uridine, leading to the formation of N6-(dimethylallyl)adenosine (i(6)A). This chain is tRNA dimethylallyltransferase, found in Mycolicibacterium gilvum (strain PYR-GCK) (Mycobacterium gilvum (strain PYR-GCK)).